The following is a 55-amino-acid chain: Large ribosomal subunit protein bL33 (55 aa).

Belongs to the bacterial ribosomal protein bL33 family.

In Acidothermus cellulolyticus (strain ATCC 43068 / DSM 8971 / 11B), this protein is Large ribosomal subunit protein bL33.